Consider the following 579-residue polypeptide: Isocitrate dehydrogenase kinase/phosphatase (579 aa).

Residues alanine 324 to methionine 330 and lysine 345 contribute to the ATP site. Aspartate 380 is a catalytic residue.

This sequence belongs to the AceK family.

Its subcellular location is the cytoplasm. It carries out the reaction L-seryl-[isocitrate dehydrogenase] + ATP = O-phospho-L-seryl-[isocitrate dehydrogenase] + ADP + H(+). Bifunctional enzyme which can phosphorylate or dephosphorylate isocitrate dehydrogenase (IDH) on a specific serine residue. This is a regulatory mechanism which enables bacteria to bypass the Krebs cycle via the glyoxylate shunt in response to the source of carbon. When bacteria are grown on glucose, IDH is fully active and unphosphorylated, but when grown on acetate or ethanol, the activity of IDH declines drastically concomitant with its phosphorylation. This is Isocitrate dehydrogenase kinase/phosphatase from Xanthomonas euvesicatoria pv. vesicatoria (strain 85-10) (Xanthomonas campestris pv. vesicatoria).